Consider the following 639-residue polypeptide: Far upstream element-binding protein 1 (639 aa).

2 disordered regions span residues 1–27 and 40–88; these read MADY…NDAF and KIGG…LPPM. Position 2 is an N-acetylalanine (Ala-2). The span at 14 to 23 shows a compositional bias: gly residues; the sequence is SAGGGGGGGV. 2 positions are modified to phosphoserine: Ser-48 and Ser-51. Over residues 61–73 the composition is skewed to basic and acidic residues; it reads RPLEDGDQPDAKK. KH domains are found at residues 95 to 159, 180 to 246, and 270 to 334; these read VMTE…KRLL, NAVQ…KEMV, and NEGI…AEII. Residue Ser-135 is modified to Phosphoserine. Thr-148 is modified (phosphothreonine). Omega-N-methylarginine is present on residues Arg-316, Arg-354, Arg-356, and Arg-358. The disordered stretch occupies residues 341–360; sequence VQAGNPGGPGPGGRGRGRGQ. The span at 345–360 shows a compositional bias: gly residues; that stretch reads NPGGPGPGGRGRGRGQ. The KH 4 domain occupies 371-438; sequence LQEFNFIVPT…QQIDYARQLI (68 aa). Thr-427 is subject to Phosphothreonine. 2 disordered regions span residues 442-527 and 543-574; these read IGGP…GTDP and QAQP…PAGQ. A compositionally biased stretch (pro residues) spans 463-500; sequence PHGPPGPPGPGTPMGPYNPAPYNPGPPGPAPHGPPAPY. Over residues 551–568 the composition is skewed to low complexity; sequence PAGAPTTTQTNGQGDQQN. Ser-625 is modified (phosphoserine).

Found in a complex with PUF60 and far upstream element (FUSE) DNA segment. Interacts with PUF60 and JTV1. Ubiquitinated. This targets the protein for proteasome-mediated degradation.

It is found in the nucleus. Regulates MYC expression by binding to a single-stranded far-upstream element (FUSE) upstream of the MYC promoter. May act both as activator and repressor of transcription. In Rattus norvegicus (Rat), this protein is Far upstream element-binding protein 1.